We begin with the raw amino-acid sequence, 396 residues long: L-lactate dehydrogenase (396 aa).

Residues 1-380 (MIISAASDYR…SGDSLVQELG (380 aa)) form the FMN hydroxy acid dehydrogenase domain. Y24 contributes to the substrate binding site. FMN contacts are provided by S106 and Q127. Substrate is bound at residue Y129. An FMN-binding site is contributed by T155. A substrate-binding site is contributed by R164. Residue K251 participates in FMN binding. Catalysis depends on H275, which acts as the Proton acceptor. R278 is a binding site for substrate. Position 306–330 (306–330 (DSGIRNGLDVVRMIALGADTVLLGR)) interacts with FMN.

Belongs to the FMN-dependent alpha-hydroxy acid dehydrogenase family. FMN serves as cofactor.

Its subcellular location is the cell inner membrane. The catalysed reaction is (S)-lactate + A = pyruvate + AH2. Catalyzes the conversion of L-lactate to pyruvate. Is coupled to the respiratory chain. The chain is L-lactate dehydrogenase from Salmonella newport (strain SL254).